A 557-amino-acid polypeptide reads, in one-letter code: MNKNIEQFPRKTTLTPQQKLEQLMEQHKTVHLTELFDKEQDRFAKYCVGCEDLVFDFSKQRINQPILDALVQLAESKQLNKWIDTLFSQNKINYTEQREAMHWALRLPADNQVYPELAKQVSDQLERMYQLVNKIHEGQYRGATGEVIQDVVNIGVGGSDLGPLMVSHALSDFKVKTAKPLNIRFVSTMDGSQLSDILHQLRPETTLFIVSSKSFSTIDTLSNAHTARKWLEKALGRESSILKSHFIGVSTKPDKMTEWGIHPDNQFLLWDWVGGRYSLWSCIGLPIALTIGVEGFKAFLAGAHGIDEHFRTTEFHQNIPVLMGLMGIWNTNYLNLKTHAVLPYDGRLKYFTSYLQQLEMESNGKSTQRNGQKVENTTCPIVWGEVGPNAQHAFYQLLHQGTQKVSCDFIAPMHRYNANHFTYVENADALIDQHLLALSNCLAQSRLLAFGNDALKVDQREQLPAYKQYEGNQPSTTMLLKELSPRTMGKLIALYEHKVFVQSVIWDINPFDQWGVEKGKEIANDLLPILNGESSDLSHLDDSTQGLIQFLLGKSNG.

Catalysis depends on glutamate 361, which acts as the Proton donor. Residues histidine 392 and lysine 520 contribute to the active site.

This sequence belongs to the GPI family.

The protein localises to the cytoplasm. The catalysed reaction is alpha-D-glucose 6-phosphate = beta-D-fructose 6-phosphate. It functions in the pathway carbohydrate biosynthesis; gluconeogenesis. Its pathway is carbohydrate degradation; glycolysis; D-glyceraldehyde 3-phosphate and glycerone phosphate from D-glucose: step 2/4. In terms of biological role, catalyzes the reversible isomerization of glucose-6-phosphate to fructose-6-phosphate. This Acinetobacter baylyi (strain ATCC 33305 / BD413 / ADP1) protein is Glucose-6-phosphate isomerase.